An 81-amino-acid polypeptide reads, in one-letter code: WAP four-disulfide core domain protein 13 (81 aa).

An N-terminal signal peptide occupies residues 1–22 (MRPVSPLQLLLVLSLAPQPVLG). The 44-residue stretch at 31-74 (YILEPPPCRSEPGACNMFCTQQEECPEPLQCCSAYCGIVCTSNQ) folds into the WAP domain. Intrachain disulfides connect Cys38–Cys62, Cys45–Cys66, Cys49–Cys61, and Cys55–Cys70.

The protein resides in the secreted. In terms of biological role, putative acid-stable proteinase inhibitor. The sequence is that of WAP four-disulfide core domain protein 13 (Wfdc13) from Mus musculus (Mouse).